Reading from the N-terminus, the 367-residue chain is tRNA pseudouridine synthase D (367 aa).

The active-site Nucleophile is the D80. In terms of domain architecture, TRUD spans 156–316 (GIPNWFGEQR…LKQERRALRL (161 aa)).

It belongs to the pseudouridine synthase TruD family.

The catalysed reaction is uridine(13) in tRNA = pseudouridine(13) in tRNA. Responsible for synthesis of pseudouridine from uracil-13 in transfer RNAs. The sequence is that of tRNA pseudouridine synthase D from Xanthomonas campestris pv. campestris (strain B100).